Here is a 244-residue protein sequence, read N- to C-terminus: Small ribosomal subunit protein eS6 (244 aa).

The tract at residues 185 to 244 (RLQRKRHMRAVKRRRYAKQREEEATYAKLLAKRKKEEREAHAKRRSSARESSLRESKSKA) is disordered. Over residues 186-201 (LQRKRHMRAVKRRRYA) the composition is skewed to basic residues. Over residues 231–244 (SARESSLRESKSKA) the composition is skewed to basic and acidic residues.

It belongs to the eukaryotic ribosomal protein eS6 family. Ribosomal protein S6 is the major substrate of protein kinases in eukaryote ribosomes.

Component of the 40S small ribosomal subunit. Plays an important role in controlling cell growth and proliferation through the selective translation of particular classes of mRNA. This Branchiostoma floridae (Florida lancelet) protein is Small ribosomal subunit protein eS6 (RPS6).